A 310-amino-acid chain; its full sequence is Methionyl-tRNA formyltransferase (310 aa).

Residue 109 to 112 (SLLP) coordinates (6S)-5,6,7,8-tetrahydrofolate.

The protein belongs to the Fmt family.

The enzyme catalyses L-methionyl-tRNA(fMet) + (6R)-10-formyltetrahydrofolate = N-formyl-L-methionyl-tRNA(fMet) + (6S)-5,6,7,8-tetrahydrofolate + H(+). Attaches a formyl group to the free amino group of methionyl-tRNA(fMet). The formyl group appears to play a dual role in the initiator identity of N-formylmethionyl-tRNA by promoting its recognition by IF2 and preventing the misappropriation of this tRNA by the elongation apparatus. In Agathobacter rectalis (strain ATCC 33656 / DSM 3377 / JCM 17463 / KCTC 5835 / VPI 0990) (Eubacterium rectale), this protein is Methionyl-tRNA formyltransferase.